The chain runs to 111 residues: DIVLTQSPASLAVSLGQRATISCRASESVDSYGNSFMHWYQQKPGQPPKLLIYRASNLESGIPARFSGSGSRTDFTLTINPVEADDVATYYCQQSNEDPYTFGGGTKLEIK.

Positions 1–23 are framework-1; sequence DIVLTQSPASLAVSLGQRATISC. Cys23 and Cys92 are oxidised to a cystine. The tract at residues 24–38 is complementarity-determining-1; that stretch reads RASESVDSYGNSFMH. Residues 39-53 are framework-2; it reads WYQQKPGQPPKLLIY. Positions 54-60 are complementarity-determining-2; the sequence is RASNLES. Residues 61 to 92 form a framework-3 region; that stretch reads GIPARFSGSGSRTDFTLTINPVEADDVATYYC. Positions 93 to 101 are complementarity-determining-3; sequence QQSNEDPYT. Residues 102–111 form a framework-4 region; sequence FGGGTKLEIK.

The protein is Ig kappa chain V-III region PC 3741/TEPC 111 of Mus musculus (Mouse).